The sequence spans 332 residues: Glyceraldehyde-3-phosphate dehydrogenase (332 aa).

NAD(+)-binding positions include 10–11 (RI), Asp-36, Lys-81, and Ser-116. D-glyceraldehyde 3-phosphate-binding positions include 150 to 152 (SCT), Thr-181, Arg-197, 210 to 211 (TK), and Arg-233. Cys-151 serves as the catalytic Nucleophile. Asn-314 is an NAD(+) binding site.

The protein belongs to the glyceraldehyde-3-phosphate dehydrogenase family. Homotetramer.

Its subcellular location is the cytoplasm. It catalyses the reaction D-glyceraldehyde 3-phosphate + phosphate + NAD(+) = (2R)-3-phospho-glyceroyl phosphate + NADH + H(+). Its pathway is carbohydrate degradation; glycolysis; pyruvate from D-glyceraldehyde 3-phosphate: step 1/5. Catalyzes the oxidative phosphorylation of glyceraldehyde 3-phosphate (G3P) to 1,3-bisphosphoglycerate (BPG) using the cofactor NAD. The first reaction step involves the formation of a hemiacetal intermediate between G3P and a cysteine residue, and this hemiacetal intermediate is then oxidized to a thioester, with concomitant reduction of NAD to NADH. The reduced NADH is then exchanged with the second NAD, and the thioester is attacked by a nucleophilic inorganic phosphate to produce BPG. The sequence is that of Glyceraldehyde-3-phosphate dehydrogenase (gapA) from Helicobacter pylori (strain J99 / ATCC 700824) (Campylobacter pylori J99).